Consider the following 156-residue polypeptide: MSIKNKMKDFFGLEEDPNSTYEEEEYAVANAAAPSTTETSVVRQDDRPKSANNLVALNTKKKDRSKVVLAEPRVFAEAQDISDHLKENRAVIVNLQRMSKEQSRQVVNFLSGVVYALEGSMTSIGHNTILCTPNNVELTGSISNLISEDELHSKGW.

A disordered region spans residues 30 to 49; it reads NAAAPSTTETSVVRQDDRPK.

The protein belongs to the SepF family. In terms of assembly, homodimer. Interacts with FtsZ.

The protein resides in the cytoplasm. In terms of biological role, cell division protein that is part of the divisome complex and is recruited early to the Z-ring. Probably stimulates Z-ring formation, perhaps through the cross-linking of FtsZ protofilaments. Its function overlaps with FtsA. The protein is Cell division protein SepF of Exiguobacterium sp. (strain ATCC BAA-1283 / AT1b).